Consider the following 212-residue polypeptide: Cell division protein SepF (212 aa).

Positions 32–104 (RYADPDTSYD…APLGSDAHRE (73 aa)) are disordered. The segment covering 64-73 (EAEEDGGDYG) has biased composition (acidic residues).

This sequence belongs to the SepF family. In terms of assembly, homodimer. Interacts with FtsZ.

The protein resides in the cytoplasm. In terms of biological role, cell division protein that is part of the divisome complex and is recruited early to the Z-ring. Probably stimulates Z-ring formation, perhaps through the cross-linking of FtsZ protofilaments. Its function overlaps with FtsA. The protein is Cell division protein SepF of Saccharopolyspora erythraea (strain ATCC 11635 / DSM 40517 / JCM 4748 / NBRC 13426 / NCIMB 8594 / NRRL 2338).